Reading from the N-terminus, the 701-residue chain is Polyribonucleotide nucleotidyltransferase (701 aa).

2 residues coordinate Mg(2+): aspartate 487 and aspartate 493. The 60-residue stretch at 554-613 (PTMLQMKIDSDKIRDVIGKGGATIRGICEETKASIDIEDDGSVKIYGETKEAAEAAKLRV) folds into the KH domain. The region spanning 623-691 (GKIYVGKVER…NRGRIKLSIK (69 aa)) is the S1 motif domain.

Belongs to the polyribonucleotide nucleotidyltransferase family. As to quaternary structure, component of the RNA degradosome, which is a multiprotein complex involved in RNA processing and mRNA degradation. Mg(2+) serves as cofactor.

It localises to the cytoplasm. It carries out the reaction RNA(n+1) + phosphate = RNA(n) + a ribonucleoside 5'-diphosphate. Functionally, involved in mRNA degradation. Catalyzes the phosphorolysis of single-stranded polyribonucleotides processively in the 3'- to 5'-direction. The protein is Polyribonucleotide nucleotidyltransferase of Pseudomonas aeruginosa (strain LESB58).